The sequence spans 108 residues: Mitochondrial pyruvate carrier 4 (108 aa).

A run of 3 helical transmembrane segments spans residues I19–I35, I51–I67, and L74–A90.

It belongs to the mitochondrial pyruvate carrier (MPC) (TC 2.A.105) family.

The protein localises to the mitochondrion inner membrane. Functionally, mediates the uptake of pyruvate into mitochondria. This chain is Mitochondrial pyruvate carrier 4, found in Arabidopsis thaliana (Mouse-ear cress).